The chain runs to 98 residues: Ferredoxin-3 (98 aa).

4Fe-4S ferredoxin-type domains lie at 18-47 and 66-95; these read FVEAVNQDKCIGCGRCFKACGRNVLILQAL and VMSIIHPEYCIGCQACARACPKNCYTHSPL. The [4Fe-4S] cluster site is built by Cys-27, Cys-30, Cys-33, Cys-37, Cys-75, Cys-78, Cys-81, and Cys-85.

As to quaternary structure, homodimer. [4Fe-4S] cluster serves as cofactor.

In terms of biological role, ferredoxins are iron-sulfur proteins that transfer electrons in a wide variety of metabolic reactions. The sequence is that of Ferredoxin-3 (fdxB) from Trichormus variabilis (strain ATCC 29413 / PCC 7937) (Anabaena variabilis).